The sequence spans 84 residues: UPF0386 protein NGR_c10980 (84 aa).

It belongs to the UPF0386 family.

The chain is UPF0386 protein NGR_c10980 from Sinorhizobium fredii (strain NBRC 101917 / NGR234).